A 620-amino-acid chain; its full sequence is Dihydroxy-acid dehydratase (620 aa).

Residue aspartate 82 participates in Mg(2+) binding. A [2Fe-2S] cluster-binding site is contributed by cysteine 123. Positions 124 and 125 each coordinate Mg(2+). N6-carboxylysine is present on lysine 125. Residue cysteine 197 coordinates [2Fe-2S] cluster. Glutamate 493 is a binding site for Mg(2+). The active-site Proton acceptor is serine 519.

The protein belongs to the IlvD/Edd family. In terms of assembly, homodimer. [2Fe-2S] cluster is required as a cofactor. The cofactor is Mg(2+).

It catalyses the reaction (2R)-2,3-dihydroxy-3-methylbutanoate = 3-methyl-2-oxobutanoate + H2O. It carries out the reaction (2R,3R)-2,3-dihydroxy-3-methylpentanoate = (S)-3-methyl-2-oxopentanoate + H2O. It functions in the pathway amino-acid biosynthesis; L-isoleucine biosynthesis; L-isoleucine from 2-oxobutanoate: step 3/4. The protein operates within amino-acid biosynthesis; L-valine biosynthesis; L-valine from pyruvate: step 3/4. Functions in the biosynthesis of branched-chain amino acids. Catalyzes the dehydration of (2R,3R)-2,3-dihydroxy-3-methylpentanoate (2,3-dihydroxy-3-methylvalerate) into 2-oxo-3-methylpentanoate (2-oxo-3-methylvalerate) and of (2R)-2,3-dihydroxy-3-methylbutanoate (2,3-dihydroxyisovalerate) into 2-oxo-3-methylbutanoate (2-oxoisovalerate), the penultimate precursor to L-isoleucine and L-valine, respectively. The protein is Dihydroxy-acid dehydratase of Bifidobacterium longum subsp. infantis (strain ATCC 15697 / DSM 20088 / JCM 1222 / NCTC 11817 / S12).